The primary structure comprises 260 residues: Sugar fermentation stimulation protein homolog (260 aa).

It belongs to the SfsA family.

The chain is Sugar fermentation stimulation protein homolog from Chloroflexus aggregans (strain MD-66 / DSM 9485).